A 362-amino-acid chain; its full sequence is Caspase activity and apoptosis inhibitor 1 (362 aa).

A compositionally biased stretch (basic residues) spans 1–14 (MTGKKSSREKRRKR). Disordered stretches follow at residues 1 to 44 (MTGK…SGCG) and 65 to 101 (TGGG…GSLQ). A compositionally biased stretch (low complexity) spans 19-32 (AAAALAAPDLVPAV). Gly residues-rich tracts occupy residues 33-44 (GGSGSGSTSGCG) and 65-74 (TGGGSGGSCW). Ser89 is subject to Phosphoserine. Thr90 is modified (phosphothreonine). Lys105 participates in a covalent cross-link: Glycyl lysine isopeptide (Lys-Gly) (interchain with G-Cter in SUMO2). Ser121 and Ser204 each carry phosphoserine. Disordered stretches follow at residues 226–251 (SCVD…GKGE), 269–291 (GPCN…EAGQ), and 309–332 (LAES…DVQP). Over residues 235 to 251 (RENKQPEGLELKQGKGE) the composition is skewed to basic and acidic residues. The segment covering 273 to 282 (EEAAAPEVPE) has biased composition (low complexity). The stretch at 282 to 312 (ENTVQSEAGQIDDLEKDIEKSVNEILGLAES) forms a coiled coil. Phosphoserine is present on Ser313.

Anti-apoptotic protein that modulates a caspase-10 dependent mitochondrial caspase-3/9 feedback amplification loop. The chain is Caspase activity and apoptosis inhibitor 1 (CAAP1) from Bos taurus (Bovine).